Consider the following 123-residue polypeptide: NADH-quinone oxidoreductase subunit A (123 aa).

3 consecutive transmembrane segments (helical) span residues 11-31 (YLPI…IMML), 68-88 (LVAI…PWAI), and 93-113 (IGKI…IGFI).

The protein belongs to the complex I subunit 3 family. As to quaternary structure, NDH-1 is composed of 14 different subunits. Subunits NuoA, H, J, K, L, M, N constitute the membrane sector of the complex.

It is found in the cell inner membrane. It carries out the reaction a quinone + NADH + 5 H(+)(in) = a quinol + NAD(+) + 4 H(+)(out). In terms of biological role, NDH-1 shuttles electrons from NADH, via FMN and iron-sulfur (Fe-S) centers, to quinones in the respiratory chain. The immediate electron acceptor for the enzyme in this species is believed to be ubiquinone. Couples the redox reaction to proton translocation (for every two electrons transferred, four hydrogen ions are translocated across the cytoplasmic membrane), and thus conserves the redox energy in a proton gradient. The chain is NADH-quinone oxidoreductase subunit A from Rickettsia typhi (strain ATCC VR-144 / Wilmington).